We begin with the raw amino-acid sequence, 223 residues long: MGQKVHPHGLRVGVIKEWDAKWYADKKNFADNLVEDHKIRNFVKKNSYAAGVSRIEIERAAKRIKLNIYTAKPGMIIGKGGQGIESLKNKLQKIVSNKNILINIVEVKRPEADAQLIAENIAQQLEKRIAFRRAMKQSIQRAMKSGVKGIKTACSGRLAGAEIARTEHYNEGTIPLQTLRADIDYGFAEADTTYGKIGVKVWVYKGEVLPARKNINEKEEANA.

The KH type-2 domain occupies 39–108 (IRNFVKKNSY…NILINIVEVK (70 aa)).

Belongs to the universal ribosomal protein uS3 family. As to quaternary structure, part of the 30S ribosomal subunit. Forms a tight complex with proteins S10 and S14.

Binds the lower part of the 30S subunit head. Binds mRNA in the 70S ribosome, positioning it for translation. The sequence is that of Small ribosomal subunit protein uS3 from Clostridium botulinum (strain Kyoto / Type A2).